The chain runs to 120 residues: Large ribosomal subunit protein bL19 (120 aa).

This sequence belongs to the bacterial ribosomal protein bL19 family.

This protein is located at the 30S-50S ribosomal subunit interface and may play a role in the structure and function of the aminoacyl-tRNA binding site. The sequence is that of Large ribosomal subunit protein bL19 from Marinomonas sp. (strain MWYL1).